The chain runs to 250 residues: Probable ABC transporter permease protein BAB2_1148 (250 aa).

The next 6 membrane-spanning stretches (helical) occupy residues 12–32 (LLSFAVGIGGWYLLTATGAVV), 63–83 (VLSGFVLGVALAIPVGFLMGW), 94–114 (WVQFFRMIPPLAVIPLAIVTL), 122–142 (IFVIFLASFLSSVVATYQGVI), 172–192 (VPFILVGVRIGLGSAWATVVA), and 211–231 (LYYDLPTIFVSLVTIGILGLF). The region spanning 56-236 (IFASLRRVLS…ILGLFMDRLL (181 aa)) is the ABC transmembrane type-1 domain.

The protein belongs to the binding-protein-dependent transport system permease family. In terms of assembly, the complex is composed of two ATP-binding proteins (BAB2_1147), two transmembrane proteins (BAB2_1148) and a solute-binding protein (BAB2_1146).

It localises to the cell inner membrane. Probably part of an ABC transporter complex. Probably responsible for the translocation of the substrate across the membrane. The chain is Probable ABC transporter permease protein BAB2_1148 from Brucella abortus (strain 2308).